The following is a 91-amino-acid chain: Small ribosomal subunit protein bS18 (91 aa).

It belongs to the bacterial ribosomal protein bS18 family. As to quaternary structure, part of the 30S ribosomal subunit. Forms a tight heterodimer with protein bS6.

Binds as a heterodimer with protein bS6 to the central domain of the 16S rRNA, where it helps stabilize the platform of the 30S subunit. The sequence is that of Small ribosomal subunit protein bS18 from Paraburkholderia phytofirmans (strain DSM 17436 / LMG 22146 / PsJN) (Burkholderia phytofirmans).